Reading from the N-terminus, the 75-residue chain is uncharacterized protein (75 aa).

The N-terminal stretch at 1–21 (MRLIVVSIMVTLLSGCGSIIS) is a signal peptide.

It to E.coli YidQ.

This is an uncharacterized protein from Escherichia coli O157:H7.